The primary structure comprises 737 residues: MAVSSALCIFSLLVLAQAQSELQQPKIELRLAGDKRKHYEGRLEVFYNNEWGTVCDDDFSIEAAHVACRQLGFLGAVAWSPSAKFGQGEGRIWLDNVHCTGRENSLAACPSNGFGVSDCRHSEDVGVICNQKRIPGHRFINIMNNNVETLEERVEEIRIRPISSHLKRIPITEGYVEVKERGKWRQICDEEWTPLNSRVACGMYGFPGEKNYNNKVYRSLSMRKKKNYWGFSVNCTGNEAHVSSCRLGKALEPKRNGTCGRGLPVVVSCVPGRAFAPSSSIGFRKAYRPEQPLVRLRGGANVGEGRVEVLKNGVWGTVCDDNWNLKAATVVCRELGFGSAKEALTGAKLGQGMGPVHMNEVECSGFEKSLTDCYFNNDALGCSHEEDAAVRCNVPAMGFQKRIRLSGGRNPFEGRVEVLAEKNGSLVWGTVCSENWGIIEAMVVCRQLGLGFASHAFQETWYWAGDANADNVVMSGVRCSGTEMSLPQCLHHGKHINCPKGGGRFAAGVSCSDTAPDLVLNAQLVEQTTYLEDRPMYALQCALEENCLSSTARKNDHSSYRRLLRFSSQIHNVGQSDFRPKLGYHAWTWHECHRHYHSMEVFTHYDLLSLNGTKVAEGHKASFCLEDTHCDEGISKRYHCANFGEQGITVGCWDTYRHDIDCQWIDVTDVKPGDYIFQVVINPNYDVAESDYTNNVMKCKCRYDGYRIWTYSCHIGGSRSSDMDEYSGMSNQLNHLR.

The N-terminal stretch at 1–18 (MAVSSALCIFSLLVLAQA) is a signal peptide. 4 consecutive SRCR domains span residues 29–130 (LRLA…VICN), 159–270 (IRPI…VSCV), 294–393 (VRLR…VRCN), and 403–512 (IRLS…VSCS). 9 disulfide bridges follow: Cys-55/Cys-119, Cys-68/Cys-129, Cys-99/Cys-109, Cys-188/Cys-259, Cys-201/Cys-269, Cys-235/Cys-245, Cys-319/Cys-382, Cys-332/Cys-392, and Cys-363/Cys-373. A glycan (N-linked (GlcNAc...) asparagine) is linked at Asn-256. N-linked (GlcNAc...) asparagine glycosylation occurs at Asn-423. Intrachain disulfides connect Cys-432/Cys-498, Cys-445/Cys-511, and Cys-479/Cys-489. Positions 516–718 (PDLVLNAQLV…WTYSCHIGGS (203 aa)) are lysyl-oxidase like. Ca(2+) contacts are provided by Asp-517 and Leu-518. Cystine bridges form between Cys-541–Cys-592, Cys-547–Cys-662, Cys-624–Cys-640, and Cys-630–Cys-652. 3 residues coordinate Cu cation: His-593, His-595, and His-597. Asn-611 carries an N-linked (GlcNAc...) asparagine glycan. Positions 620–656 (KASFCLEDTHCDEGISKRYHCANFGEQGITVGCWDTY) form a cross-link, lysine tyrosylquinone (Lys-Tyr). Position 656 is a 2',4',5'-topaquinone (Tyr-656). Positions 689, 691, 694, and 695 each coordinate Ca(2+). Residues Cys-699 and Cys-713 are joined by a disulfide bond.

It belongs to the lysyl oxidase family. Cu cation serves as cofactor. Requires lysine tyrosylquinone residue as cofactor. Post-translationally, the lysine tyrosylquinone cross-link (LTQ) is generated by condensation of the epsilon-amino group of a lysine with a topaquinone produced by oxidation of tyrosine.

The protein resides in the secreted. Its subcellular location is the extracellular space. The protein localises to the extracellular matrix. It localises to the basement membrane. It is found in the nucleus. The protein resides in the chromosome. Its subcellular location is the endoplasmic reticulum. It carries out the reaction L-lysyl-[protein] + O2 + H2O = (S)-2-amino-6-oxohexanoyl-[protein] + H2O2 + NH4(+). In terms of biological role, mediates the post-translational oxidative deamination of lysine residues on target proteins leading to the formation of deaminated lysine (allysine). Acts as a transcription corepressor and specifically mediates deamination of trimethylated 'Lys-4' of histone H3 (H3K4me3), a specific tag for epigenetic transcriptional activation. Shows no activity against histone H3 when it is trimethylated on 'Lys-9' (H3K9me3) or 'Lys-27' (H3K27me3) or when 'Lys-4' is monomethylated (H3K4me1) or dimethylated (H3K4me2). Also mediates deamination of methylated TAF10, a member of the transcription factor IID (TFIID) complex, which induces release of TAF10 from promoters, leading to inhibition of TFIID-dependent transcription. LOXL2-mediated deamination of TAF10 results in transcriptional repression of genes required for embryonic stem cell pluripotency. Involved in epithelial to mesenchymal transition (EMT) and participates in repression of E-cadherin, probably by mediating deamination of histone H3. When secreted into the extracellular matrix, promotes cross-linking of extracellular matrix proteins by mediating oxidative deamination of peptidyl lysine residues in precursors to fibrous collagen and elastin. Acts as a regulator of sprouting angiogenesis, probably via collagen IV scaffolding. Acts as a regulator of chondrocyte differentiation, probably by regulating expression of factors that control chondrocyte differentiation. Required with loxl2b for correct expression of Sox2 and for neural differentiation. This is Lysyl oxidase homolog 2A (loxl2a) from Danio rerio (Zebrafish).